Here is a 637-residue protein sequence, read N- to C-terminus: 1-deoxy-D-xylulose-5-phosphate synthase (637 aa).

Residues H76 and 117 to 119 (GHS) contribute to the thiamine diphosphate site. D148 contacts Mg(2+). Residues 149–150 (GA), N177, Y294, and E381 each bind thiamine diphosphate. Position 177 (N177) interacts with Mg(2+).

The protein belongs to the transketolase family. DXPS subfamily. As to quaternary structure, homodimer. Mg(2+) serves as cofactor. The cofactor is thiamine diphosphate.

It catalyses the reaction D-glyceraldehyde 3-phosphate + pyruvate + H(+) = 1-deoxy-D-xylulose 5-phosphate + CO2. The protein operates within metabolic intermediate biosynthesis; 1-deoxy-D-xylulose 5-phosphate biosynthesis; 1-deoxy-D-xylulose 5-phosphate from D-glyceraldehyde 3-phosphate and pyruvate: step 1/1. Functionally, catalyzes the acyloin condensation reaction between C atoms 2 and 3 of pyruvate and glyceraldehyde 3-phosphate to yield 1-deoxy-D-xylulose-5-phosphate (DXP). The chain is 1-deoxy-D-xylulose-5-phosphate synthase from Neisseria meningitidis serogroup C / serotype 2a (strain ATCC 700532 / DSM 15464 / FAM18).